Here is a 223-residue protein sequence, read N- to C-terminus: Glycosylphosphatidylinositol anchor biosynthesis protein 11 (223 aa).

The next 6 helical transmembrane spans lie at 25–45 (LAVV…SAGI), 52–72 (VMTQ…VVVL), 88–108 (MIAA…LVLF), 120–140 (FVCA…TYHL), 158–178 (VYAA…PIPY), and 189–209 (ITIL…GIAL).

The protein belongs to the PIGF family.

It is found in the endoplasmic reticulum membrane. It functions in the pathway glycolipid biosynthesis; glycosylphosphatidylinositol-anchor biosynthesis. Functionally, acts in the GPI biosynthetic pathway between GlcNAc-PI synthesis and GPI transfer to protein. This is Glycosylphosphatidylinositol anchor biosynthesis protein 11 (GPI11) from Yarrowia lipolytica (strain CLIB 122 / E 150) (Yeast).